A 460-amino-acid chain; its full sequence is tRNA modification GTPase MnmE (460 aa).

Residues R24, E81, and K121 each contribute to the (6S)-5-formyl-5,6,7,8-tetrahydrofolate site. The region spanning 218 to 385 (GMVVAIAGPP…LIAAIEDFAA (168 aa)) is the TrmE-type G domain. GTP-binding positions include 228–233 (NVGKST), 247–253 (SPHAGTT), and 272–275 (DTAG). Mg(2+) contacts are provided by S232 and T253. Position 460 (K460) interacts with (6S)-5-formyl-5,6,7,8-tetrahydrofolate.

This sequence belongs to the TRAFAC class TrmE-Era-EngA-EngB-Septin-like GTPase superfamily. TrmE GTPase family. Homodimer. Heterotetramer of two MnmE and two MnmG subunits. K(+) serves as cofactor.

Its subcellular location is the cytoplasm. Exhibits a very high intrinsic GTPase hydrolysis rate. Involved in the addition of a carboxymethylaminomethyl (cmnm) group at the wobble position (U34) of certain tRNAs, forming tRNA-cmnm(5)s(2)U34. The protein is tRNA modification GTPase MnmE of Rhodopseudomonas palustris (strain BisB5).